A 303-amino-acid polypeptide reads, in one-letter code: UDP-3-O-acyl-N-acetylglucosamine deacetylase (303 aa).

H78, H237, and D241 together coordinate Zn(2+). The active-site Proton donor is H264.

This sequence belongs to the LpxC family. It depends on Zn(2+) as a cofactor.

The catalysed reaction is a UDP-3-O-[(3R)-3-hydroxyacyl]-N-acetyl-alpha-D-glucosamine + H2O = a UDP-3-O-[(3R)-3-hydroxyacyl]-alpha-D-glucosamine + acetate. It functions in the pathway glycolipid biosynthesis; lipid IV(A) biosynthesis; lipid IV(A) from (3R)-3-hydroxytetradecanoyl-[acyl-carrier-protein] and UDP-N-acetyl-alpha-D-glucosamine: step 2/6. Catalyzes the hydrolysis of UDP-3-O-myristoyl-N-acetylglucosamine to form UDP-3-O-myristoylglucosamine and acetate, the committed step in lipid A biosynthesis. The chain is UDP-3-O-acyl-N-acetylglucosamine deacetylase from Xanthomonas campestris pv. campestris (strain 8004).